We begin with the raw amino-acid sequence, 238 residues long: Ribonuclease PH (238 aa).

Phosphate-binding positions include arginine 86 and 124-126 (GTR).

Belongs to the RNase PH family. Homohexameric ring arranged as a trimer of dimers.

It carries out the reaction tRNA(n+1) + phosphate = tRNA(n) + a ribonucleoside 5'-diphosphate. Phosphorolytic 3'-5' exoribonuclease that plays an important role in tRNA 3'-end maturation. Removes nucleotide residues following the 3'-CCA terminus of tRNAs; can also add nucleotides to the ends of RNA molecules by using nucleoside diphosphates as substrates, but this may not be physiologically important. Probably plays a role in initiation of 16S rRNA degradation (leading to ribosome degradation) during starvation. The protein is Ribonuclease PH of Enterobacter sp. (strain 638).